A 387-amino-acid chain; its full sequence is Exodeoxyribonuclease 7 large subunit (387 aa).

It belongs to the XseA family. As to quaternary structure, heterooligomer composed of large and small subunits.

The protein resides in the cytoplasm. The enzyme catalyses Exonucleolytic cleavage in either 5'- to 3'- or 3'- to 5'-direction to yield nucleoside 5'-phosphates.. Its function is as follows. Bidirectionally degrades single-stranded DNA into large acid-insoluble oligonucleotides, which are then degraded further into small acid-soluble oligonucleotides. This Campylobacter jejuni subsp. doylei (strain ATCC BAA-1458 / RM4099 / 269.97) protein is Exodeoxyribonuclease 7 large subunit.